A 335-amino-acid polypeptide reads, in one-letter code: Phosphoserine phosphatase RsbU (335 aa).

The region spanning 123–333 (DIGAISVPAK…DDFTLIVLRR (211 aa)) is the PPM-type phosphatase domain.

The enzyme catalyses O-phospho-L-serine + H2O = L-serine + phosphate. It carries out the reaction O-phospho-D-serine + H2O = D-serine + phosphate. Its activity is regulated as follows. Stimulated by a long-lived interaction with RsbT. In terms of biological role, positive regulator of sigma-B activity. Dephosphorylates RsbV in response to environmental stress conveyed from the RsbXST module. This is Phosphoserine phosphatase RsbU (rsbU) from Bacillus subtilis (strain 168).